Consider the following 213-residue polypeptide: Large ribosomal subunit protein uL1 (213 aa).

The protein belongs to the universal ribosomal protein uL1 family. As to quaternary structure, part of the 50S ribosomal subunit.

Its function is as follows. Binds directly to 23S rRNA. Probably involved in E site tRNA release. Functionally, protein L1 is also a translational repressor protein, it controls the translation of its operon by binding to its mRNA. The protein is Large ribosomal subunit protein uL1 of Methanosarcina barkeri (strain Fusaro / DSM 804).